The sequence spans 53 residues: Large ribosomal subunit protein eL24 (53 aa).

Zn(2+)-binding residues include C4, C7, C30, and C34. The C4-type zinc-finger motif lies at 4–34 (CSFCHEEIEPGTGKMYVKRDGTIYFFCSSKC).

This sequence belongs to the eukaryotic ribosomal protein eL24 family. As to quaternary structure, part of the 50S ribosomal subunit. Forms a cluster with proteins L3 and L14. Zn(2+) is required as a cofactor.

Its function is as follows. Binds to the 23S rRNA. This is Large ribosomal subunit protein eL24 from Methanothermobacter thermautotrophicus (strain ATCC 29096 / DSM 1053 / JCM 10044 / NBRC 100330 / Delta H) (Methanobacterium thermoautotrophicum).